The following is a 261-amino-acid chain: MNPFLNTAFKAARRAGQMMIRAAGNLDAVKTDSKAFNDFVSDVDRNSEIILVEALKEAYPHHKITCEESGSHGKAAAEYEWIIDPLDGTTNFLHGHPQYAISMALLHKGVLQEALVYAPERNDVYMASRGKGALLNDRRIRVSNRIELNRCLIGTGFPVVDQSMMDKYLAILKDFLAKTAGGRREGAASLDLCAVATGRFDGFFEFNLKPWDIAAGALIVQEAGGIVTDMSGEDGWLESGDIVAANPKVLAQMLKIISAHV.

Residues Glu67, Asp84, and Leu86 each contribute to the Mg(2+) site. Residue Glu67 participates in substrate binding. Residues 86 to 89 (LDGT), Arg183, and Asp212 contribute to the substrate site.

Belongs to the inositol monophosphatase superfamily. Homodimer. The rRNA transcription and antitermination complex (rrnTAC) consists of RNA polymerase (RNAP), NusA, NusB, NusE (rpsJ), NusG, SubB, ribosomal protein S4, DNA and precursor rRNA; S4 is more flexible than other subunits. Mg(2+) is required as a cofactor.

It localises to the cytoplasm. It catalyses the reaction a myo-inositol phosphate + H2O = myo-inositol + phosphate. Might be part of the processive rRNA transcription and antitermination complex (rrnTAC). The complex forms an RNA-chaperone ring around the RNA exit tunnel of RNA polymerase (RNAP). It supports rapid transcription and antitermination of rRNA operons, cotranscriptional rRNA folding, and annealing of distal rRNA regions to allow correct ribosome biogenesis. This subunit may play a central role in organizing the structure. The sequence is that of Putative Nus factor SuhB (suhB) from Neisseria meningitidis serogroup B (strain ATCC BAA-335 / MC58).